We begin with the raw amino-acid sequence, 213 residues long: Pyridoxine/pyridoxamine 5'-phosphate oxidase (213 aa).

FMN contacts are provided by residues 60 to 65 (RMVLMK), 75 to 76 (YS), K82, and Q104. K65 contributes to the substrate binding site. Substrate is bound by residues Y122, R126, and S130. FMN-binding positions include 139–140 (QS) and W184. 190 to 192 (RLH) contacts substrate. R194 is a binding site for FMN.

It belongs to the pyridoxamine 5'-phosphate oxidase family. In terms of assembly, homodimer. FMN is required as a cofactor.

The catalysed reaction is pyridoxamine 5'-phosphate + O2 + H2O = pyridoxal 5'-phosphate + H2O2 + NH4(+). The enzyme catalyses pyridoxine 5'-phosphate + O2 = pyridoxal 5'-phosphate + H2O2. It functions in the pathway cofactor metabolism; pyridoxal 5'-phosphate salvage; pyridoxal 5'-phosphate from pyridoxamine 5'-phosphate: step 1/1. It participates in cofactor metabolism; pyridoxal 5'-phosphate salvage; pyridoxal 5'-phosphate from pyridoxine 5'-phosphate: step 1/1. Functionally, catalyzes the oxidation of either pyridoxine 5'-phosphate (PNP) or pyridoxamine 5'-phosphate (PMP) into pyridoxal 5'-phosphate (PLP). The chain is Pyridoxine/pyridoxamine 5'-phosphate oxidase from Rhodopseudomonas palustris (strain BisB18).